The sequence spans 1704 residues: Phospholipid-transporting ATPase ABCA3 (1704 aa).

N14 carries N-linked (GlcNAc...) asparagine glycosylation. A helical membrane pass occupies residues 22 to 42 (VLVTVLELFLPLLFSGILIWL). N-linked (GlcNAc...) asparagine glycans are attached at residues N53, N124, N140, and N228. A run of 5 helical transmembrane segments spans residues 251 to 271 (ISDP…MLSF), 307 to 327 (AWFL…TLLF), 344 to 364 (SLVL…SFMV), 373 to 393 (MAAT…FFVA), and 405 to 425 (LLSC…IGKF). One can recognise an ABC transporter 1 domain in the interval 530–763 (IKIKHLSKVF…YGAGYHMTLV (234 aa)). 566–573 (GHNGAGKT) is an ATP binding site. Residues N620 and N945 are each glycosylated (N-linked (GlcNAc...) asparagine). 6 consecutive transmembrane segments (helical) span residues 1100–1120 (IALN…ILAV), 1144–1164 (SALL…LVVF), 1183–1203 (LLLM…SFFF), 1213–1233 (LTIF…IMRI), 1245–1265 (LDHV…SNFY), and 1310–1330 (MAAS…NLLW). N-linked (GlcNAc...) asparagine glycosylation occurs at N1350. In terms of domain architecture, ABC transporter 2 spans 1381 to 1614 (LIINELSKVY…FGSGYSLQAK (234 aa)). 1416–1423 (GFNGAGKT) contacts ATP.

As to quaternary structure, homooligomer; disulfide-linked. Post-translationally, N-glycosylated. Localization at intracellular vesicles is accompanied by processing of oligosaccharide from high mannose type to complex type. N-linked glycosylation at Asn-124 and Asn-140 is required for stability and efficient anterograde trafficking and prevents from proteasomal degradation. In terms of processing, proteolytically cleaved by CTSL and to a lower extent by CTSB within multivesicular bodies (MVB) and lamellar bodies (LB) leading to a mature form of 150 kDa. Highly expressed in lung, moderately expressed in stomach, intestine, and kidney and weakly expressed in thyroid, brain, liver, spleen, heart, testis, and thymus.

Its subcellular location is the endosome. The protein localises to the multivesicular body membrane. It localises to the cytoplasmic vesicle membrane. The protein resides in the late endosome membrane. It is found in the lysosome membrane. It carries out the reaction ATP + H2O + xenobioticSide 1 = ADP + phosphate + xenobioticSide 2.. The enzyme catalyses a 1,2-diacyl-sn-glycero-3-phosphocholine(in) + ATP + H2O = a 1,2-diacyl-sn-glycero-3-phosphocholine(out) + ADP + phosphate + H(+). It catalyses the reaction ATP + H2O + phospholipidSide 1 = ADP + phosphate + phospholipidSide 2.. The catalysed reaction is 1,2-dihexadecanoyl-sn-glycero-3-phosphocholine(in) + ATP + H2O = 1,2-dihexadecanoyl-sn-glycero-3-phosphocholine(out) + ADP + phosphate + H(+). It carries out the reaction cholesterol(in) + ATP + H2O = cholesterol(out) + ADP + phosphate + H(+). The enzyme catalyses a 1,2-diacyl-sn-glycero-3-phospho-(1'-sn-glycerol)(in) + ATP + H2O = a 1,2-diacyl-sn-glycero-3-phospho-(1'-sn-glycerol)(out) + ADP + phosphate + H(+). Functionally, catalyzes the ATP-dependent transport of phospholipids such as phosphatidylcholine and phosphoglycerol from the cytoplasm into the lumen side of lamellar bodies, in turn participates in the lamellar bodies biogenesis and homeostasis of pulmonary surfactant. Transports preferentially phosphatidylcholine containing short acyl chains. In addition plays a role as an efflux transporter of miltefosine across macrophage membranes and free cholesterol (FC) through intralumenal vesicles by removing FC from the cell as a component of surfactant and protects cells from free cholesterol toxicity. The protein is Phospholipid-transporting ATPase ABCA3 of Rattus norvegicus (Rat).